A 267-amino-acid chain; its full sequence is MLLAIDVRNTHTTVGLISGSGDHAKVVQQWRIRTESEATADELALTIDGLIGEDSERLTGAVGLSTVPSVLHEVRLMLEQYWPSVPHVMIEPGVRTGIPLLVDNPKEVGADRIVNCLAAYHRFGTAAIVVDFGSSICVDVVSAKGEFLGGAIAPGVQVSSDAAAARSAALRRVELTRPRSVIGKNTVECMQSGALFGFAGLVDGLVNRIREDVAGFSGTDVAVVATGHTAPLVLPDVHTVAHYDRHLTLDGLRLVFERNRDGQRGRR.

6-13 (DVRNTHTT) serves as a coordination point for ATP. Residue 109 to 112 (GADR) coordinates substrate. The Proton acceptor role is filled by Asp-111. K(+) is bound at residue Asp-131. Ser-134 serves as a coordination point for ATP. Thr-186 contacts substrate.

The protein belongs to the type III pantothenate kinase family. In terms of assembly, homodimer. It depends on NH4(+) as a cofactor. Requires K(+) as cofactor.

The protein resides in the cytoplasm. It carries out the reaction (R)-pantothenate + ATP = (R)-4'-phosphopantothenate + ADP + H(+). It participates in cofactor biosynthesis; coenzyme A biosynthesis; CoA from (R)-pantothenate: step 1/5. Its function is as follows. Catalyzes the phosphorylation of pantothenate (Pan), the first step in CoA biosynthesis. This Mycobacterium sp. (strain JLS) protein is Type III pantothenate kinase.